A 78-amino-acid chain; its full sequence is Serine--glyoxylate aminotransferase (78 aa).

It belongs to the class-V pyridoxal-phosphate-dependent aminotransferase family. Homodimer. Pyridoxal 5'-phosphate serves as cofactor. Expressed in leaves but not in root tissue or seedlings.

It is found in the peroxisome. It catalyses the reaction glyoxylate + L-serine = 3-hydroxypyruvate + glycine. The enzyme catalyses glyoxylate + L-alanine = glycine + pyruvate. Its activity is regulated as follows. Inhibited by aminooxyacetate. The protein is Serine--glyoxylate aminotransferase of Triticum aestivum (Wheat).